A 185-amino-acid chain; its full sequence is Ribosome-recycling factor (185 aa).

It belongs to the RRF family.

It is found in the cytoplasm. Functionally, responsible for the release of ribosomes from messenger RNA at the termination of protein biosynthesis. May increase the efficiency of translation by recycling ribosomes from one round of translation to another. This is Ribosome-recycling factor from Shewanella amazonensis (strain ATCC BAA-1098 / SB2B).